The following is a 36-amino-acid chain: Pancreatic polypeptide (36 aa).

Position 36 is a tyrosine amide (tyrosine 36).

The protein belongs to the NPY family.

It is found in the secreted. Hormone secreted by pancreatic cells that acts as a regulator of pancreatic and gastrointestinal functions probably by signaling through the G protein-coupled receptor NPY4R2. In Oryctolagus cuniculus (Rabbit), this protein is Pancreatic polypeptide (PPY).